The primary structure comprises 607 residues: Major facilitator superfamily multidrug transporter mdrA (607 aa).

The next 12 helical transmembrane spans lie at 77-97 (MTVA…TGGV), 110-130 (VATL…LLWA), 139-159 (QIIF…SAGA), 170-190 (FFAG…IADM), 202-222 (LFAA…GFLG), 229-249 (WVMG…TIFV), 305-325 (PIVF…YMLF), 342-362 (VSSL…TYSV), 385-405 (LPPT…FAWT), 413-433 (IVCI…FLGI), 443-463 (IFAA…GAVF), and 478-498 (WASS…FLFY). The interval 523–583 (EQMKQAPEPE…ASTRTASSLR (61 aa)) is disordered. Residues 553 to 564 (DVSETESNVEEL) show a composition bias toward acidic residues. Low complexity predominate over residues 572–583 (SRASTRTASSLR).

Belongs to the major facilitator superfamily. DHA1 family. Polyamines/proton antiporter (TC 2.A.1.2.16) subfamily.

It localises to the cell membrane. Functionally, MFS transporter involved in the basal level of azole susceptibility. Confers resistance to voriconazole and, to a lesser extent, to fluconazole. This chain is Major facilitator superfamily multidrug transporter mdrA, found in Aspergillus fumigatus (strain ATCC MYA-4609 / CBS 101355 / FGSC A1100 / Af293) (Neosartorya fumigata).